Here is a 378-residue protein sequence, read N- to C-terminus: Ferredoxin--NADP reductase, embryo isozyme, chloroplastic (378 aa).

The N-terminal 62 residues, 1–62 (MASALGAQAS…SRHMNKIFSM (62 aa)), are a transit peptide targeting the chloroplast. Positions 93–221 (KEPYTATIVS…TGPSGKIMLL (129 aa)) constitute an FAD-binding FR-type domain. Residues 153 to 156 (RLYS), 174 to 176 (CVR), tyrosine 180, 195 to 197 (ICS), and threonine 237 each bind FAD. The NADP(+) site is built by serine 156 and arginine 176. Residues threonine 237, 269–270 (VA), 299–300 (SR), lysine 309, 337–338 (GL), and glutamate 376 contribute to the NADP(+) site.

It belongs to the ferredoxin--NADP reductase type 1 family. FAD is required as a cofactor.

It is found in the plastid. The protein localises to the chloroplast. The enzyme catalyses 2 reduced [2Fe-2S]-[ferredoxin] + NADP(+) + H(+) = 2 oxidized [2Fe-2S]-[ferredoxin] + NADPH. It participates in energy metabolism; photosynthesis. Its function is as follows. May play a key role in regulating the relative amounts of cyclic and non-cyclic electron flow to meet the demands of the plant for ATP and reducing power. Is involved in nitrate assimilation. This chain is Ferredoxin--NADP reductase, embryo isozyme, chloroplastic, found in Oryza sativa subsp. japonica (Rice).